We begin with the raw amino-acid sequence, 275 residues long: 3-methyl-2-oxobutanoate hydroxymethyltransferase (275 aa).

The Mg(2+) site is built by Asp-49 and Asp-88. 3-methyl-2-oxobutanoate-binding positions include 49-50 (DS), Asp-88, and Lys-118. Position 120 (Glu-120) interacts with Mg(2+). Glu-187 acts as the Proton acceptor in catalysis.

It belongs to the PanB family. As to quaternary structure, homodecamer; pentamer of dimers. Mg(2+) serves as cofactor.

It localises to the cytoplasm. The catalysed reaction is 3-methyl-2-oxobutanoate + (6R)-5,10-methylene-5,6,7,8-tetrahydrofolate + H2O = 2-dehydropantoate + (6S)-5,6,7,8-tetrahydrofolate. Its pathway is cofactor biosynthesis; (R)-pantothenate biosynthesis; (R)-pantoate from 3-methyl-2-oxobutanoate: step 1/2. Functionally, catalyzes the reversible reaction in which hydroxymethyl group from 5,10-methylenetetrahydrofolate is transferred onto alpha-ketoisovalerate to form ketopantoate. This is 3-methyl-2-oxobutanoate hydroxymethyltransferase from Rhodospirillum centenum (strain ATCC 51521 / SW).